The sequence spans 661 residues: Peroxisomal acyl-coenzyme A oxidase 1 (661 aa).

Serine 26 bears the Phosphoserine mark. Lysine 65 carries the N6-acetyllysine modification. N6-succinyllysine is present on residues lysine 89 and lysine 90. An FAD-binding site is contributed by threonine 139. Lysine 159 is subject to N6-succinyllysine. Glycine 178 is an FAD binding site. N6-acetyllysine is present on lysine 216. Residue lysine 241 is modified to N6-succinyllysine. N6-acetyllysine occurs at positions 255, 267, and 272. At lysine 349 the chain carries N6-succinyllysine. Catalysis depends on glutamate 421, which acts as the Proton acceptor. 2 positions are modified to N6-acetyllysine; alternate: lysine 437 and lysine 446. Lysine 437 and lysine 446 each carry N6-succinyllysine; alternate. The residue at position 500 (lysine 500) is an N6-acetyllysine. An N6-acetyllysine; alternate modification is found at lysine 512. Lysine 512 carries the post-translational modification N6-succinyllysine; alternate. Lysine 542 bears the N6-succinyllysine mark. Residue lysine 637 is modified to N6-acetyllysine; alternate. Lysine 637 bears the N6-succinyllysine; alternate mark. At lysine 643 the chain carries N6-succinyllysine. Serine 649 bears the Phosphoserine mark. At lysine 652 the chain carries N6-acetyllysine. Lysine 655 is subject to N6-succinyllysine. The Microbody targeting signal signature appears at 659-661; it reads SKL.

It belongs to the acyl-CoA oxidase family. Homodimer. Interacts with LONP2. The cofactor is FAD. In terms of tissue distribution, highest levels of isoform 1 are found in liver and kidney while highest levels of isoform 2 are found in white adipose tissue. Isoform 1 is expressed at higher levels than isoform 2 in liver and kidney while isoform 2 is expressed at higher levels in brain, heart, lung, muscle, white adipose tissue and testis.

The protein resides in the peroxisome. The enzyme catalyses a 2,3-saturated acyl-CoA + O2 = a (2E)-enoyl-CoA + H2O2. It carries out the reaction hexadecanoyl-CoA + O2 = (2E)-hexadecenoyl-CoA + H2O2. It catalyses the reaction dodecanoyl-CoA + O2 = (2E)-dodecenoyl-CoA + H2O2. The catalysed reaction is octanoyl-CoA + O2 = (2E)-octenoyl-CoA + H2O2. The enzyme catalyses decanoyl-CoA + O2 = (2E)-decenoyl-CoA + H2O2. It carries out the reaction tetradecanoyl-CoA + O2 = (2E)-tetradecenoyl-CoA + H2O2. It catalyses the reaction hexadecanedioyl-CoA + O2 = (2E)-hexadecenedioyl-CoA + H2O2. The catalysed reaction is tetracosanoyl-CoA + O2 = (2E)-tetracosenoyl-CoA + H2O2. The enzyme catalyses glutaryl-CoA + O2 = (2E)-glutaconyl-CoA + H2O2. It carries out the reaction hexanoyl-CoA + O2 = (2E)-hexenoyl-CoA + H2O2. It catalyses the reaction octadecanoyl-CoA + O2 = (2E)-octadecenoyl-CoA + H2O2. The catalysed reaction is (5Z,8Z,11Z,14Z,17Z)-eicosapentaenoyl-CoA + O2 = (2E,5Z,8Z,11Z,14Z,17Z)-icosahexaenoyl-CoA + H2O2. The enzyme catalyses (6Z,9Z,12Z,15Z,18Z,21Z)-tetracosahexaenoyl-CoA + O2 = (2E,6Z,9Z,12Z,15Z,18Z,21Z)-tetracosaheptaenoyl-CoA + H2O2. It participates in lipid metabolism; peroxisomal fatty acid beta-oxidation. Functionally, involved in the initial and rate-limiting step of peroxisomal beta-oxidation of straight-chain saturated and unsaturated very-long-chain fatty acids. Catalyzes the desaturation of fatty acyl-CoAs such as palmitoyl-CoA (hexadecanoyl-CoA) to 2-trans-enoyl-CoAs ((2E)-enoyl-CoAs) such as (2E)-hexadecenoyl-CoA, and donates electrons directly to molecular oxygen (O(2)), thereby producing hydrogen peroxide (H(2)O(2)). In terms of biological role, shows highest activity against medium-chain fatty acyl-CoAs. Shows optimum activity with a chain length of 10 carbons (decanoyl-CoA) in vitro. Is active against a much broader range of substrates and shows activity towards long-chain acyl-CoAs. In Mus musculus (Mouse), this protein is Peroxisomal acyl-coenzyme A oxidase 1.